Here is a 210-residue protein sequence, read N- to C-terminus: Uracil phosphoribosyltransferase (210 aa).

Residues Arg-80, Arg-105, and 132 to 140 (DPMLATGGS) contribute to the 5-phospho-alpha-D-ribose 1-diphosphate site. Residues Ile-195 and 200 to 202 (GDA) each bind uracil. Asp-201 serves as a coordination point for 5-phospho-alpha-D-ribose 1-diphosphate.

The protein belongs to the UPRTase family. The cofactor is Mg(2+).

It catalyses the reaction UMP + diphosphate = 5-phospho-alpha-D-ribose 1-diphosphate + uracil. The protein operates within pyrimidine metabolism; UMP biosynthesis via salvage pathway; UMP from uracil: step 1/1. With respect to regulation, allosterically activated by GTP. In terms of biological role, catalyzes the conversion of uracil and 5-phospho-alpha-D-ribose 1-diphosphate (PRPP) to UMP and diphosphate. This chain is Uracil phosphoribosyltransferase, found in Caldanaerobacter subterraneus subsp. tengcongensis (strain DSM 15242 / JCM 11007 / NBRC 100824 / MB4) (Thermoanaerobacter tengcongensis).